The chain runs to 77 residues: Acyl carrier protein (77 aa).

A Carrier domain is found at 2 to 77 (ADVLERVTKI…DAVNYIKSRL (76 aa)). An O-(pantetheine 4'-phosphoryl)serine modification is found at serine 37.

Belongs to the acyl carrier protein (ACP) family. In terms of processing, 4'-phosphopantetheine is transferred from CoA to a specific serine of apo-ACP by AcpS. This modification is essential for activity because fatty acids are bound in thioester linkage to the sulfhydryl of the prosthetic group.

The protein resides in the cytoplasm. It functions in the pathway lipid metabolism; fatty acid biosynthesis. Carrier of the growing fatty acid chain in fatty acid biosynthesis. This chain is Acyl carrier protein, found in Geobacillus kaustophilus (strain HTA426).